Consider the following 509-residue polypeptide: Acetyl-coenzyme A carboxylase carboxyl transferase subunit beta, chloroplastic (509 aa).

Positions 164–216 (HGSVCDGESHNSSEGESSSRRTHTKGVDLTIRESSNENERESSNENERKSSND) are disordered. 2 stretches are compositionally biased toward basic and acidic residues: residues 170–182 (GESHNSSEGESSS) and 193–216 (TIRESSNENERESSNENERKSSND). The CoA carboxyltransferase N-terminal domain occupies 226–509 (LWLQCENCYG…LNQNSNQVEC (284 aa)). Residues cysteine 230, cysteine 233, cysteine 249, and cysteine 252 each coordinate Zn(2+). A C4-type zinc finger spans residues 230 to 252 (CENCYGLNYKKFLKSKMNICEQC). Residues 288-307 (FDSEGEQEQEQEQEQEEEET) are disordered.

It belongs to the AccD/PCCB family. Acetyl-CoA carboxylase is a heterohexamer composed of biotin carboxyl carrier protein, biotin carboxylase and 2 subunits each of ACCase subunit alpha and ACCase plastid-coded subunit beta (accD). Requires Zn(2+) as cofactor.

The protein localises to the plastid. It localises to the chloroplast stroma. It catalyses the reaction N(6)-carboxybiotinyl-L-lysyl-[protein] + acetyl-CoA = N(6)-biotinyl-L-lysyl-[protein] + malonyl-CoA. The protein operates within lipid metabolism; malonyl-CoA biosynthesis; malonyl-CoA from acetyl-CoA: step 1/1. Component of the acetyl coenzyme A carboxylase (ACC) complex. Biotin carboxylase (BC) catalyzes the carboxylation of biotin on its carrier protein (BCCP) and then the CO(2) group is transferred by the transcarboxylase to acetyl-CoA to form malonyl-CoA. This Ipomoea purpurea (Common morning glory) protein is Acetyl-coenzyme A carboxylase carboxyl transferase subunit beta, chloroplastic.